Here is a 126-residue protein sequence, read N- to C-terminus: Holo-[acyl-carrier-protein] synthase (126 aa).

Mg(2+) contacts are provided by D9 and E58.

It belongs to the P-Pant transferase superfamily. AcpS family. Mg(2+) is required as a cofactor.

The protein localises to the cytoplasm. It carries out the reaction apo-[ACP] + CoA = holo-[ACP] + adenosine 3',5'-bisphosphate + H(+). Its function is as follows. Transfers the 4'-phosphopantetheine moiety from coenzyme A to a Ser of acyl-carrier-protein. The polypeptide is Holo-[acyl-carrier-protein] synthase (Buchnera aphidicola subsp. Acyrthosiphon pisum (strain APS) (Acyrthosiphon pisum symbiotic bacterium)).